The sequence spans 97 residues: Large ribosomal subunit protein uL23 (97 aa).

The protein belongs to the universal ribosomal protein uL23 family. As to quaternary structure, part of the 50S ribosomal subunit. Contacts protein L29, and trigger factor when it is bound to the ribosome.

Functionally, one of the early assembly proteins it binds 23S rRNA. One of the proteins that surrounds the polypeptide exit tunnel on the outside of the ribosome. Forms the main docking site for trigger factor binding to the ribosome. In Thermoanaerobacter pseudethanolicus (strain ATCC 33223 / 39E) (Clostridium thermohydrosulfuricum), this protein is Large ribosomal subunit protein uL23.